Consider the following 686-residue polypeptide: Homoaconitase, mitochondrial (686 aa).

Residues 1-17 (MRVVRCVRRFSASRAVS) constitute a mitochondrion transit peptide. [4Fe-4S] cluster is bound by residues Cys-337, Cys-401, and Cys-404.

It belongs to the aconitase/IPM isomerase family. [4Fe-4S] cluster is required as a cofactor.

The protein resides in the mitochondrion. The enzyme catalyses (2R,3S)-homoisocitrate = cis-homoaconitate + H2O. It functions in the pathway amino-acid biosynthesis; L-lysine biosynthesis via AAA pathway; L-alpha-aminoadipate from 2-oxoglutarate: step 3/5. Catalyzes the reversible hydration of cis-homoaconitate to (2R,3S)-homoisocitrate, a step in the alpha-aminoadipate pathway for lysine biosynthesis. The polypeptide is Homoaconitase, mitochondrial (LYS4) (Eremothecium gossypii (strain ATCC 10895 / CBS 109.51 / FGSC 9923 / NRRL Y-1056) (Yeast)).